The following is a 119-amino-acid chain: Large ribosomal subunit protein bL20 (119 aa).

It belongs to the bacterial ribosomal protein bL20 family.

Its function is as follows. Binds directly to 23S ribosomal RNA and is necessary for the in vitro assembly process of the 50S ribosomal subunit. It is not involved in the protein synthesizing functions of that subunit. The polypeptide is Large ribosomal subunit protein bL20 (Acinetobacter baumannii (strain SDF)).